Here is a 188-residue protein sequence, read N- to C-terminus: Acireductone dioxygenase (188 aa).

Fe(2+) contacts are provided by His-97, His-99, Glu-103, and His-141. Residues His-97, His-99, Glu-103, and His-141 each coordinate Ni(2+).

Belongs to the acireductone dioxygenase (ARD) family. Monomer. Fe(2+) is required as a cofactor. It depends on Ni(2+) as a cofactor.

It carries out the reaction 1,2-dihydroxy-5-(methylsulfanyl)pent-1-en-3-one + O2 = 3-(methylsulfanyl)propanoate + CO + formate + 2 H(+). It catalyses the reaction 1,2-dihydroxy-5-(methylsulfanyl)pent-1-en-3-one + O2 = 4-methylsulfanyl-2-oxobutanoate + formate + 2 H(+). It participates in amino-acid biosynthesis; L-methionine biosynthesis via salvage pathway; L-methionine from S-methyl-5-thio-alpha-D-ribose 1-phosphate: step 5/6. In terms of biological role, catalyzes 2 different reactions between oxygen and the acireductone 1,2-dihydroxy-3-keto-5-methylthiopentene (DHK-MTPene) depending upon the metal bound in the active site. Fe-containing acireductone dioxygenase (Fe-ARD) produces formate and 2-keto-4-methylthiobutyrate (KMTB), the alpha-ketoacid precursor of methionine in the methionine recycle pathway. Ni-containing acireductone dioxygenase (Ni-ARD) produces methylthiopropionate, carbon monoxide and formate, and does not lie on the methionine recycle pathway. In Xanthomonas oryzae pv. oryzae (strain MAFF 311018), this protein is Acireductone dioxygenase.